A 229-amino-acid polypeptide reads, in one-letter code: Uracil-DNA glycosylase (229 aa).

Catalysis depends on Asp-64, which acts as the Proton acceptor.

The protein belongs to the uracil-DNA glycosylase (UDG) superfamily. UNG family.

The protein localises to the cytoplasm. It catalyses the reaction Hydrolyzes single-stranded DNA or mismatched double-stranded DNA and polynucleotides, releasing free uracil.. Functionally, excises uracil residues from the DNA which can arise as a result of misincorporation of dUMP residues by DNA polymerase or due to deamination of cytosine. This chain is Uracil-DNA glycosylase, found in Salmonella arizonae (strain ATCC BAA-731 / CDC346-86 / RSK2980).